The sequence spans 111 residues: Macrodomain Ori protein (111 aa).

The protein belongs to the MaoP family.

Involved in the organization of the Ori region of the chromosome into a macrodomain (MD). It constrains DNA mobility in the Ori macrodomain and limits long-distance DNA interactions with other chromosomal regions. This chain is Macrodomain Ori protein, found in Haemophilus influenzae (strain ATCC 51907 / DSM 11121 / KW20 / Rd).